The primary structure comprises 59 residues: UPF0181 protein YoaH (59 aa).

The protein belongs to the UPF0181 family.

The sequence is that of UPF0181 protein YoaH from Salmonella arizonae (strain ATCC BAA-731 / CDC346-86 / RSK2980).